A 457-amino-acid polypeptide reads, in one-letter code: Serine--tRNA ligase (457 aa).

252–254 (TAE) lines the L-serine pocket. ATP is bound by residues 283-285 (RKE) and Val-299. Glu-306 lines the L-serine pocket. Position 370–373 (370–373 (EMVS)) interacts with ATP. L-serine is bound at residue Thr-406.

It belongs to the class-II aminoacyl-tRNA synthetase family. Type-1 seryl-tRNA synthetase subfamily. In terms of assembly, homodimer. The tRNA molecule binds across the dimer.

It localises to the cytoplasm. The enzyme catalyses tRNA(Ser) + L-serine + ATP = L-seryl-tRNA(Ser) + AMP + diphosphate + H(+). It catalyses the reaction tRNA(Sec) + L-serine + ATP = L-seryl-tRNA(Sec) + AMP + diphosphate + H(+). It functions in the pathway aminoacyl-tRNA biosynthesis; selenocysteinyl-tRNA(Sec) biosynthesis; L-seryl-tRNA(Sec) from L-serine and tRNA(Sec): step 1/1. Its function is as follows. Catalyzes the attachment of serine to tRNA(Ser). Is also able to aminoacylate tRNA(Sec) with serine, to form the misacylated tRNA L-seryl-tRNA(Sec), which will be further converted into selenocysteinyl-tRNA(Sec). The protein is Serine--tRNA ligase of Saccharolobus islandicus (strain Y.G.57.14 / Yellowstone #1) (Sulfolobus islandicus).